Consider the following 608-residue polypeptide: DNA mismatch repair protein MutL (608 aa).

Residues 363 to 397 are disordered; the sequence is ASLAMARKPDPPRFHETARPQPDPRHTPGTESVSV. The segment covering 369 to 390 has biased composition (basic and acidic residues); sequence RKPDPPRFHETARPQPDPRHTP.

The protein belongs to the DNA mismatch repair MutL/HexB family.

In terms of biological role, this protein is involved in the repair of mismatches in DNA. It is required for dam-dependent methyl-directed DNA mismatch repair. May act as a 'molecular matchmaker', a protein that promotes the formation of a stable complex between two or more DNA-binding proteins in an ATP-dependent manner without itself being part of a final effector complex. In Pelobacter propionicus (strain DSM 2379 / NBRC 103807 / OttBd1), this protein is DNA mismatch repair protein MutL.